Reading from the N-terminus, the 676-residue chain is Envelope glycoprotein (676 aa).

The N-terminal stretch at 1-32 (MGVTGILQLPRDRFKRTSFFLWVIILFQRTFS) is a signal peptide. Residues 33–650 (IPLGVIHNST…NDNWWTGWRQ (618 aa)) are Extracellular-facing. N-linked (GlcNAc...) asparagine; by host glycosylation is present at asparagine 40. Intrachain disulfides connect cysteine 53-cysteine 609, cysteine 108-cysteine 135, cysteine 121-cysteine 147, cysteine 511-cysteine 556, and cysteine 601-cysteine 608. The receptor-binding stretch occupies residues 54–201 (RDKLSSTNQL…DFFSSHPLRE (148 aa)). 11 N-linked (GlcNAc...) asparagine; by host glycosylation sites follow: asparagine 204, asparagine 228, asparagine 238, asparagine 257, asparagine 268, asparagine 296, asparagine 317, asparagine 333, asparagine 346, asparagine 386, and asparagine 413. Residues 305-485 (ELSFTVVSNG…SGKLGLITNT (181 aa)) form a mucin-like region region. Residues 315–335 (AKNISGQSPARTSSDPGTNTT) show a composition bias toward polar residues. The interval 315–337 (AKNISGQSPARTSSDPGTNTTTE) is disordered. The span at 373–391 (TSPQSLTTKPGPDNSTHNT) shows a compositional bias: polar residues. Disordered stretches follow at residues 373–392 (TSPQSLTTKPGPDNSTHNTP) and 402–479 (TQVE…SGKL). The span at 414–432 (DSTASDTPSATTAAGPPKA) shows a compositional bias: low complexity. A compositionally biased stretch (polar residues) spans 433-464 (ENTNTSKSTDFLDPATTTSPQNHSETAGNNNT). Asparagine 436, asparagine 454, and asparagine 462 each carry an N-linked (GlcNAc...) asparagine; by host glycan. The segment at 524–539 (GAAIGLAWIPYFGPAA) is fusion peptide. Residues 554–595 (LICGLRQLANETTQALQLFLRATTELRTFSILNRKAIDFLLQ) are a coiled coil. Residue asparagine 563 is glycosylated (N-linked (GlcNAc...) asparagine; by host). Positions 615–634 (WTKNITDKIDQIIHDFVDKT) form a coiled coil. Asparagine 618 carries N-linked (GlcNAc...) asparagine; by host glycosylation. A helical membrane pass occupies residues 651-671 (WIPAGIGVTGVIIAVIALFCI). Residues cysteine 670 and cysteine 672 are each lipidated (S-palmitoyl cysteine; by host). Over 672 to 676 (CKFVF) the chain is Cytoplasmic.

This sequence belongs to the filoviruses glycoprotein family. Homotrimer; each monomer consists of a GP1 and a GP2 subunit linked by disulfide bonds. The resulting peplomers (GP1,2) protrude from the virus surface as spikes. Interacts with host integrin alpha-V/ITGAV. Interacts with host CLEC10A. Binds also to host CD209 and CLEC4M/DC-SIGN(R). Interacts with host FOLR1. Interacts with BST2; this interaction inhibits the antiviral effect of BST2 and this allows viral release from infected cells. Interacts with host FCN1; this interaction enhances viral entry. Interacts with host TLR4; this interaction induces cell death in T-lymphocytes or proinflammatory cytokines and SOCS1 production in monocytes. As to quaternary structure, interacts with host entry receptor NPC1. In terms of assembly, GP1 and GP2delta are part of GP1,2delta soluble complexes released by ectodomain shedding. In terms of processing, the signal peptide region modulates GP's high mannose glycosylation, thereby determining the efficiency of the interactions with DC-SIGN(R). Post-translationally, N-glycosylated. O-glycosylated in the mucin-like region. In terms of processing, palmitoylation of GP2 is not required for its function. Post-translationally, specific enzymatic cleavages in vivo yield mature proteins. The precursor is processed into GP1 and GP2 by host cell furin in the trans Golgi, and maybe by other host proteases, to yield the mature GP1 and GP2 proteins. The cleavage site corresponds to the furin optimal cleavage sequence [KR]-X-[KR]-R. This cleavage does not seem to be required for function. After the internalization of the virus into cell endosomes, GP1 C-terminus is removed by the endosomal proteases cathepsin B, cathepsin L, or both, leaving a 19-kDa N-terminal fragment which is further digested by cathepsin B. Proteolytic processing of GP1,2 by host ADAM17 can remove the transmembrane anchor of GP2 and leads to shedding of complexes consisting in GP1 and truncated GP2 (GP1,2delta).

It localises to the virion membrane. The protein resides in the host cell membrane. Its subcellular location is the secreted. Functionally, trimeric GP1,2 complexes form the virion surface spikes and mediate the viral entry processes, with GP1 acting as the receptor-binding subunit and GP2 as the membrane fusion subunit. At later times of infection, down-regulates the expression of various host cell surface molecules that are essential for immune surveillance and cell adhesion. Down-modulates several integrins including ITGA1, ITGA2, ITGA3, ITGA4, ITGA5, ITGA6, ITGAV and ITGB1. This decrease in cell adhesion molecules may lead to cell detachment, contributing to the disruption of blood vessel integrity and hemorrhages developed during infection (cytotoxicity). Interacts with host TLR4 and thereby stimulates the differentiation and activation of monocytes leading to bystander death of T-lymphocytes. Down-regulates as well the function of host natural killer cells. Counteracts the antiviral effect of host BST2/tetherin that restricts release of progeny virions from infected cells. However, cooperates with VP40 and host BST2 to activate canonical NF-kappa-B pathway in a manner dependent on neddylation. Its function is as follows. Functions as a decoy for anti-GP1,2 antibodies thereby contributing to viral immune evasion. Interacts and activates host macrophages and dendritic cells inducing up-regulation of cytokine transcription. This effect is mediated throught activation of host TLR4. In terms of biological role, responsible for binding to the receptor(s) on target cells. Interacts with CD209/DC-SIGN and CLEC4M/DC-SIGNR which act as cofactors for virus entry into dendritic cells (DCs) and endothelial cells. Binding to the macrophage specific lectin CLEC10A also seems to enhance virus infectivity. Interaction with FOLR1/folate receptor alpha may be a cofactor for virus entry in some cell types, although results are contradictory. Members of the Tyro3 receptor tyrosine kinase family also seem to be cell entry factors in filovirus infection. Once attached, the virions are internalized through clathrin-dependent endocytosis and/or macropinocytosis. After internalization of the virus into the endosomes of the host cell, proteolysis of GP1 by two cysteine proteases, CTSB/cathepsin B and CTSL/cathepsin L removes the glycan cap and allows GP1 binding to the host entry receptor NPC1. NPC1-binding, Ca(2+) and acidic pH induce a conformational change of GP2, which unmasks its fusion peptide and permit membranes fusion. Acts as a class I viral fusion protein. Under the current model, the protein has at least 3 conformational states: pre-fusion native state, pre-hairpin intermediate state, and post-fusion hairpin state. During viral and target cell membrane fusion, the coiled coil regions (heptad repeats) assume a trimer-of-hairpins structure, positioning the fusion peptide in close proximity to the C-terminal region of the ectodomain. The formation of this structure appears to drive apposition and subsequent fusion of viral and target cell membranes. Responsible for penetration of the virus into the cell cytoplasm by mediating the fusion of the membrane of the endocytosed virus particle with the endosomal membrane. Low pH in endosomes induces an irreversible conformational change in GP2, releasing the fusion hydrophobic peptide. The sequence is that of Envelope glycoprotein (GP) from Epomops franqueti (Franquet's epauletted fruit bat).